A 117-amino-acid polypeptide reads, in one-letter code: Probable non-functional immunoglobulin heavy variable 3-16 (117 aa).

The N-terminal stretch at 1–19 (MEFGLSWVFLAGILKGVQC) is a signal peptide. The segment at 20–44 (EVQLVESGGGLVQPGGSLRLSCAAS) is framework-1. Residues 21–117 (VQLVESGGGL…EDMAVYYCVR (97 aa)) form the Ig-like domain. C41 and C115 are oxidised to a cystine. The complementarity-determining-1 stretch occupies residues 45–52 (GFTFSNSD). The interval 53-69 (MNWARKAPGKGLEWVSG) is framework-2. Residues 70-77 (VSWNGSRT) are complementarity-determining-2. Residue N73 is glycosylated (N-linked (GlcNAc...) asparagine). Residues 78 to 115 (HYVDSVKRRFIISRDNSRNSLYLQKNRRRAEDMAVYYC) are framework-3. A complementarity-determining-3 region spans residues 116–117 (VR).

As to quaternary structure, immunoglobulins are composed of two identical heavy chains and two identical light chains; disulfide-linked.

It is found in the secreted. Its subcellular location is the cell membrane. Functionally, probable non-functional open reading frame (ORF) of V region of the variable domain of immunoglobulin heavy chains. Non-functional ORF generally cannot participate in the synthesis of a productive immunoglobulin chain due to altered V-(D)-J or switch recombination and/or splicing site (at mRNA level) and/or conserved amino acid change (protein level). Immunoglobulins, also known as antibodies, are membrane-bound or secreted glycoproteins produced by B lymphocytes. In the recognition phase of humoral immunity, the membrane-bound immunoglobulins serve as receptors which, upon binding of a specific antigen, trigger the clonal expansion and differentiation of B lymphocytes into immunoglobulins-secreting plasma cells. Secreted immunoglobulins mediate the effector phase of humoral immunity, which results in the elimination of bound antigens. The antigen binding site is formed by the variable domain of one heavy chain, together with that of its associated light chain. Thus, each immunoglobulin has two antigen binding sites with remarkable affinity for a particular antigen. The variable domains are assembled by a process called V-(D)-J rearrangement and can then be subjected to somatic hypermutations which, after exposure to antigen and selection, allow affinity maturation for a particular antigen. The sequence is that of Probable non-functional immunoglobulin heavy variable 3-16 from Homo sapiens (Human).